We begin with the raw amino-acid sequence, 209 residues long: Ribonuclease HII (209 aa).

The region spanning 19–209 is the RNase H type-2 domain; the sequence is CIIVGVDEVG…LPGITKLYSK (191 aa). Positions 25, 26, and 118 each coordinate a divalent metal cation.

The protein belongs to the RNase HII family. It depends on Mn(2+) as a cofactor. The cofactor is Mg(2+).

The protein resides in the cytoplasm. It catalyses the reaction Endonucleolytic cleavage to 5'-phosphomonoester.. Functionally, endonuclease that specifically degrades the RNA of RNA-DNA hybrids. The chain is Ribonuclease HII from Ehrlichia canis (strain Jake).